The sequence spans 387 residues: Cysteine desulfurase IscS (387 aa).

Pyridoxal 5'-phosphate is bound by residues 73–74 (AT), asparagine 155, glutamine 183, and 203–205 (SAH). Lysine 206 bears the N6-(pyridoxal phosphate)lysine mark. Threonine 241 is a pyridoxal 5'-phosphate binding site. The active-site Cysteine persulfide intermediate is the cysteine 328. Cysteine 328 contributes to the [2Fe-2S] cluster binding site.

It belongs to the class-V pyridoxal-phosphate-dependent aminotransferase family. NifS/IscS subfamily. Homodimer. Forms a heterotetramer with IscU, interacts with other sulfur acceptors. Requires pyridoxal 5'-phosphate as cofactor.

The protein localises to the cytoplasm. The enzyme catalyses (sulfur carrier)-H + L-cysteine = (sulfur carrier)-SH + L-alanine. It functions in the pathway cofactor biosynthesis; iron-sulfur cluster biosynthesis. Functionally, master enzyme that delivers sulfur to a number of partners involved in Fe-S cluster assembly, tRNA modification or cofactor biosynthesis. Catalyzes the removal of elemental sulfur atoms from cysteine to produce alanine. Functions as a sulfur delivery protein for Fe-S cluster synthesis onto IscU, an Fe-S scaffold assembly protein, as well as other S acceptor proteins. The polypeptide is Cysteine desulfurase IscS (Helicobacter pylori (strain P12)).